A 257-amino-acid polypeptide reads, in one-letter code: UPF0246 protein YaaA (257 aa).

This sequence belongs to the UPF0246 family.

This Salmonella arizonae (strain ATCC BAA-731 / CDC346-86 / RSK2980) protein is UPF0246 protein YaaA.